Reading from the N-terminus, the 359-residue chain is Outer membrane protein P2 (359 aa).

The first 20 residues, 1–20 (MKKTLAALIVGAFAASAANA), serve as a signal peptide directing secretion.

The protein belongs to the Gram-negative porin family. In terms of assembly, homotrimer.

It localises to the cell outer membrane. Forms pores that allow passive diffusion of small molecules across the outer membrane. This is Outer membrane protein P2 (ompP2) from Haemophilus influenzae (strain ATCC 51907 / DSM 11121 / KW20 / Rd).